The following is a 380-amino-acid chain: Ubiquitin-like protein 7 (380 aa).

Positions 18–98 constitute a Ubiquitin-like domain; the sequence is APKSILRLPE…VLRKSWPEPD (81 aa). Positions 201-313 are disordered; it reads PMPGADSSSR…SSSVQSGTPI (113 aa). Serine 230 carries the post-translational modification Phosphoserine. 2 stretches are compositionally biased toward low complexity: residues 239-255 and 270-312; these read SARSTPSSSTPSSRPAS and SELA…SGTP. Residues 333–377 form the UBA domain; that stretch reads SLQSQWQPQLQQLRDMGIQDDELSLRALQATGGDIQAALELIFAG.

Binds ubiquitin. Interacts with MAVS; this interaction enhances TRIM21-dependent 'Lys-27'-linked polyubiquitination of MAVS. Post-translationally, deubiquitinated by OTUD4 which stabilizes UBL7 expression.

In terms of biological role, interferon-stimulated protein that positively regulates RNA virus-triggered innate immune signaling. Mechanistically, promotes 'Lys-27'-linked polyubiquitination of MAVS through TRIM21 leading to enhanced the IFN signaling pathway. The protein is Ubiquitin-like protein 7 (UBL7) of Bos taurus (Bovine).